The primary structure comprises 407 residues: Arginine biosynthesis bifunctional protein ArgJ (407 aa).

Residues Thr157, Lys183, Thr194, Glu280, Asn402, and Thr407 each contribute to the substrate site. Thr194 serves as the catalytic Nucleophile.

Belongs to the ArgJ family. As to quaternary structure, heterotetramer of two alpha and two beta chains.

The protein resides in the cytoplasm. The enzyme catalyses N(2)-acetyl-L-ornithine + L-glutamate = N-acetyl-L-glutamate + L-ornithine. It catalyses the reaction L-glutamate + acetyl-CoA = N-acetyl-L-glutamate + CoA + H(+). Its pathway is amino-acid biosynthesis; L-arginine biosynthesis; L-ornithine and N-acetyl-L-glutamate from L-glutamate and N(2)-acetyl-L-ornithine (cyclic): step 1/1. It participates in amino-acid biosynthesis; L-arginine biosynthesis; N(2)-acetyl-L-ornithine from L-glutamate: step 1/4. Catalyzes two activities which are involved in the cyclic version of arginine biosynthesis: the synthesis of N-acetylglutamate from glutamate and acetyl-CoA as the acetyl donor, and of ornithine by transacetylation between N(2)-acetylornithine and glutamate. In Bacillus cereus (strain ATCC 10987 / NRS 248), this protein is Arginine biosynthesis bifunctional protein ArgJ.